The sequence spans 241 residues: Tetraspanin-1 (241 aa).

At 1 to 11 the chain is on the cytoplasmic side; the sequence is MQCFSFIKTMM. The chain crosses the membrane as a helical span at residues 12 to 34; the sequence is ILFNLLIFLCGAALLAVGIWVSI. The Extracellular portion of the chain corresponds to 35-53; it reads DGASFLKIFGPLSSSAMQF. A helical membrane pass occupies residues 54–76; it reads VNVGYFLIAAGVVVFALGFLGCY. The Cytoplasmic portion of the chain corresponds to 77–88; that stretch reads GAKTESKCALMT. Residues 89–111 traverse the membrane as a helical segment; the sequence is FFFILLLIFIAEVAAAVVALVYT. The Extracellular portion of the chain corresponds to 112 to 214; the sequence is TMAEHFLTLL…LYDIRTNAVT (103 aa). Residues N141, N154, N178, and N184 are each glycosylated (N-linked (GlcNAc...) asparagine). Residues 215–237 form a helical membrane-spanning segment; the sequence is VGGVAAGIGGLELAAMIVSMYLY. Topologically, residues 238-241 are cytoplasmic; the sequence is CNLQ.

The protein belongs to the tetraspanin (TM4SF) family. As to quaternary structure, interacts with SLC19A2. Interacts with NTRK1/TRKA.

Its subcellular location is the lysosome membrane. Its function is as follows. Structural component of specialized membrane microdomains known as tetraspanin-enriched microdomains (TERMs), which act as platforms for receptor clustering and signaling. Participates thereby in diverse biological functions such as cell signal transduction, adhesion, migration and protein trafficking. Regulates neuronal differentiation in response to NGF by facilitating NGF-mediated activation of NTRK1/TRKA receptor tyrosine kinase and subsequent downstream signaling pathways. Plays a role in the inhibition of TNFalpha-induced apoptosis. Mechanistically, inhibits the NF-kappa-B signaling pathway by blocking phosphorylation of CHUK. Also promotes the stability of the thiamine transporter 1/SLC19A2 in intestinal epithelial cells leading to an increase of thiamine uptake process. This chain is Tetraspanin-1 (TSPAN1), found in Pongo abelii (Sumatran orangutan).